The sequence spans 99 residues: Large ribosomal subunit protein uL23 (99 aa).

Belongs to the universal ribosomal protein uL23 family. As to quaternary structure, part of the 50S ribosomal subunit. Contacts protein L29, and trigger factor when it is bound to the ribosome.

Functionally, one of the early assembly proteins it binds 23S rRNA. One of the proteins that surrounds the polypeptide exit tunnel on the outside of the ribosome. Forms the main docking site for trigger factor binding to the ribosome. This chain is Large ribosomal subunit protein uL23, found in Stenotrophomonas maltophilia (strain R551-3).